A 403-amino-acid chain; its full sequence is RNA-binding motif, single-stranded-interacting protein 1 (403 aa).

Residues 30–56 are disordered; that stretch reads PAHPMAPPSPSTTSSNNNSSSSSNSGW. Positions 40–54 are enriched in low complexity; that stretch reads STTSSNNNSSSSSNS. 2 consecutive RRM domains span residues 62 to 135 and 141 to 226; these read TNLY…MAKQ and TNLY…FADG. A Phosphothreonine modification is found at Thr-208.

The protein resides in the nucleus. Its function is as follows. Single-stranded DNA binding protein that interacts with the region upstream of the MYC gene. Binds specifically to the DNA sequence motif 5'-[AT]CT[AT][AT]T-3'. Probably has a role in DNA replication. The chain is RNA-binding motif, single-stranded-interacting protein 1 from Rattus norvegicus (Rat).